The sequence spans 446 residues: MQKKYFGTDGIRGKVGNSLINAEFMLKLGWAVGRVLANSHSATVLIGKDTRISGYMIESALQAGLSAAGVNIKLTGPMPTPAIAYLTHSVRADAGIVISASHNHYPDNGVKFFNKDGFKLSDELELAIEKQIDKPMKTVVADRLGKAARMNEAHGRYIEFCKSTFPSNLTLKGLKIVVDCANGAAYAVAPSIFHELGAEVVAIADDPDGFNINQTCGATDTAHLQEMVVKHNADVGIAFDGDGDRLIMVDHHGLRVDGDELLCIMAIDRFYLKENAPLGVVGTIMSNLGLEHTLKRHHIAFERSPVGDRYVLDLMQQKGWFLGGESSGHIVDLGFTTTGDGVITALQILRIMQQAEKPLADLKKVMVKHPQVLINVPIKGILDIAQNPNIKKAITEAEKQLNGAGRILLRPSGTEPVIRVMVEGSDEGIVRQTAEMLAAAVQQSTL.

Ser101 (phosphoserine intermediate) is an active-site residue. Positions 101, 240, 242, and 244 each coordinate Mg(2+). At Ser101 the chain carries Phosphoserine.

The protein belongs to the phosphohexose mutase family. Mg(2+) serves as cofactor. Post-translationally, activated by phosphorylation.

It catalyses the reaction alpha-D-glucosamine 1-phosphate = D-glucosamine 6-phosphate. Catalyzes the conversion of glucosamine-6-phosphate to glucosamine-1-phosphate. This is Phosphoglucosamine mutase from Coxiella burnetii (strain RSA 331 / Henzerling II).